We begin with the raw amino-acid sequence, 122 residues long: Basic phospholipase A2 F15 (122 aa).

Cystine bridges form between C26–C115, C28–C44, C43–C95, C49–C122, C50–C88, C57–C81, and C75–C86. Residues Y27, G29, and G31 each coordinate Ca(2+). H47 is an active-site residue. Ca(2+) is bound at residue D48. D89 is an active-site residue.

The protein belongs to the phospholipase A2 family. Group II subfamily. D49 sub-subfamily. When this protein is associated with crotapotin (F5 or F7), it forms the crotoxin protein. The cofactor is Ca(2+). Expressed by the venom gland.

It localises to the secreted. It catalyses the reaction a 1,2-diacyl-sn-glycero-3-phosphocholine + H2O = a 1-acyl-sn-glycero-3-phosphocholine + a fatty acid + H(+). With respect to regulation, activated by heparin. Inhibited by its chaperone crotapotin. Snake venom phospholipase A2 (PLA2) that shows moderate neurotoxic activity in isolated mouse phrenic nerve diaphragm but shows high neurotoxic activity in a chick biventer cervis preparation. Also shows a high bactericidal effect against both Gram-negative and Gram-positive bacteria. PLA2 catalyzes the calcium-dependent hydrolysis of the 2-acyl groups in 3-sn-phosphoglycerides. The protein is Basic phospholipase A2 F15 of Crotalus durissus terrificus (South American rattlesnake).